The chain runs to 266 residues: Uracil-DNA glycosylase (266 aa).

Positions 1 to 25 (MTRRADPAQATLFDDDEPAGAPTAT) are disordered. Catalysis depends on Asp-97, which acts as the Proton acceptor.

It belongs to the uracil-DNA glycosylase (UDG) superfamily. UNG family.

Its subcellular location is the cytoplasm. It catalyses the reaction Hydrolyzes single-stranded DNA or mismatched double-stranded DNA and polynucleotides, releasing free uracil.. Its function is as follows. Excises uracil residues from the DNA which can arise as a result of misincorporation of dUMP residues by DNA polymerase or due to deamination of cytosine. This Ralstonia nicotianae (strain ATCC BAA-1114 / GMI1000) (Ralstonia solanacearum) protein is Uracil-DNA glycosylase.